The sequence spans 273 residues: 4-hydroxy-tetrahydrodipicolinate reductase (273 aa).

11-16 contacts NAD(+); it reads GAGGRM. R37 is an NADP(+) binding site. Residues 100 to 102 and 124 to 127 contribute to the NAD(+) site; these read GTT and AANY. H157 serves as the catalytic Proton donor/acceptor. Position 158 (H158) interacts with (S)-2,3,4,5-tetrahydrodipicolinate. K161 functions as the Proton donor in the catalytic mechanism. A (S)-2,3,4,5-tetrahydrodipicolinate-binding site is contributed by 167–168; that stretch reads GT.

Belongs to the DapB family.

Its subcellular location is the cytoplasm. It catalyses the reaction (S)-2,3,4,5-tetrahydrodipicolinate + NAD(+) + H2O = (2S,4S)-4-hydroxy-2,3,4,5-tetrahydrodipicolinate + NADH + H(+). The enzyme catalyses (S)-2,3,4,5-tetrahydrodipicolinate + NADP(+) + H2O = (2S,4S)-4-hydroxy-2,3,4,5-tetrahydrodipicolinate + NADPH + H(+). Its pathway is amino-acid biosynthesis; L-lysine biosynthesis via DAP pathway; (S)-tetrahydrodipicolinate from L-aspartate: step 4/4. Catalyzes the conversion of 4-hydroxy-tetrahydrodipicolinate (HTPA) to tetrahydrodipicolinate. This is 4-hydroxy-tetrahydrodipicolinate reductase from Acinetobacter baumannii (strain AB307-0294).